The primary structure comprises 495 residues: Glutamate--tRNA ligase (495 aa).

Positions Pro-14–Ser-24 match the 'HIGH' region motif. Residues Lys-255–Arg-259 carry the 'KMSKS' region motif. Residue Lys-258 participates in ATP binding.

The protein belongs to the class-I aminoacyl-tRNA synthetase family. Glutamate--tRNA ligase type 1 subfamily. Monomer.

It localises to the cytoplasm. It carries out the reaction tRNA(Glu) + L-glutamate + ATP = L-glutamyl-tRNA(Glu) + AMP + diphosphate. Functionally, catalyzes the attachment of glutamate to tRNA(Glu) in a two-step reaction: glutamate is first activated by ATP to form Glu-AMP and then transferred to the acceptor end of tRNA(Glu). In Herpetosiphon aurantiacus (strain ATCC 23779 / DSM 785 / 114-95), this protein is Glutamate--tRNA ligase.